Reading from the N-terminus, the 267-residue chain is MSTKLRYLHHPASQPCRAVHQFMLENNIEFQEEIVDITTDINEQPEFRERYNPTGQVPILVDGDFTIWESAAIVYYLSEKYDCSSSWWGSTLEERGHIQQYMHWYAYTLRLGGGAFHWTIFAPMIYGYDKDFTVEVTKGRFLLYESFDILEKYWLKDGDYLCGNTLSYPDLATCQDLVSHDAGRIIPTSMWDSHPKVKAWFARMMDREHAKTVSAWQYENVRKYLDDGVKLNFQRKTAVLKGTEVYSGHNNGIIYNGDDDSFVTQHG.

The 83-residue stretch at 3–85 folds into the GST N-terminal domain; that stretch reads TKLRYLHHPA…YLSEKYDCSS (83 aa). Residues 91 to 224 form the GST C-terminal domain; the sequence is TLEERGHIQQ…AWQYENVRKY (134 aa).

It belongs to the GST superfamily. In terms of assembly, homohexamer.

It is found in the cytoplasm. The enzyme catalyses dichloromethane + H2O = formaldehyde + 2 chloride + 2 H(+). Its pathway is xenobiotic degradation; dichloromethane degradation. The sequence is that of Dichloromethane dehalogenase (dcmA) from Methylophilus leisingeri (strain DSM 6813 / VKM B-2013 / DM11).